The chain runs to 167 residues: Protein FimG (167 aa).

The N-terminal stretch at 1-23 is a signal peptide; that stretch reads MKWCKRGYVLAAILALASATIQA. A disulfide bond links cysteine 39 and cysteine 77.

This sequence belongs to the fimbrial protein family.

It is found in the fimbrium. Functionally, involved in regulation of length and mediation of adhesion of type 1 fimbriae (but not necessary for the production of fimbriae). Involved in the integration of FimH in the fimbriae. The sequence is that of Protein FimG (fimG) from Escherichia coli (strain K12).